Reading from the N-terminus, the 513-residue chain is Nuclear pore complex protein NUP58 (513 aa).

3 disordered regions span residues 28–62 (QTNS…QPQQ), 217–239 (SVGS…GQQQ), and 356–513 (RETA…TTRR). Over residues 30-50 (NSIFSQSQPQQTNSIFSQSQP) the composition is skewed to polar residues. Low complexity-rich tracts occupy residues 51–62 (QQTNSIFSQPQQ) and 217–227 (SVGSQPSQGQG). Residues 356 to 365 (RETAKQEAAA) show a composition bias toward basic and acidic residues. Residues 377 to 386 (STTSTQPSTQ) are compositionally biased toward low complexity. Over residues 393–427 (SSATPGGSNPPQTSVPTSNPSSGAGFSFLNTPASG) the composition is skewed to polar residues. Low complexity predominate over residues 428–446 (PSSSLFATPSSTAPTSSLF). 6 consecutive repeat copies span residues 446–447 (FG), 458–459 (FG), 466–467 (FG), 473–474 (FG), 486–487 (FG), and 497–498 (FG). A 6 X 2 AA repeats of F-G region spans residues 446 to 498 (FGPSPTPTQTPLFGSSPASTFGSTQSLFGQTTPSLTMPSQFGGATPGSGASFG). Over residues 452–484 (PTQTPLFGSSPASTFGSTQSLFGQTTPSLTMPS) the composition is skewed to polar residues. The span at 504–513 (SRPKSRTTRR) shows a compositional bias: basic residues.

The protein belongs to the NUP58 family. Part of the nuclear pore complex (NPC). The NPC has an eight-fold symmetrical structure comprising a central transport channel and two rings, the cytoplasmic and nuclear rings, to which eight filaments are attached. The cytoplasmic filaments have loose ends, while the nuclear filaments are joined in a distal ring, forming a nuclear basket. NPCs are highly dynamic in configuration and composition, and can be devided in 3 subcomplexes, the NUP62 subcomplex, the NUP107-160 subcomplex and the NUP93 subcomplex, containing approximately 30 different nucleoporin proteins. Interacts with GAI, NUP62, SKP1A and SKP1B. Ubiquitous. Higherst expression in cauline leaves, lowest in roots.

The protein localises to the nucleus envelope. It is found in the nucleus. Its subcellular location is the nuclear pore complex. Its function is as follows. Involved in nucleocytoplasmic trafficking. May have regulatory roles in the gibberellin pathway, in auxin signaling and in light perception. This chain is Nuclear pore complex protein NUP58, found in Arabidopsis thaliana (Mouse-ear cress).